Reading from the N-terminus, the 1218-residue chain is ABC transporter NFT1 (1218 aa).

At 1–29 (MIKNGTCPYWERDDLSECARREYIEFKFP) the chain is on the extracellular side. The N-linked (GlcNAc...) asparagine glycan is linked to asparagine 4. Residues 30–50 (LFILLTGMIYAFCKVFRAFYL) traverse the membrane as a helical segment. The Cytoplasmic portion of the chain corresponds to 51–103 (RGKNHTNEAPEFEEQGNGNHEYARFSVLRLKSAWESRSFCNVNNRSTFDKFKK). The helical transmembrane segment at 104–124 (FIEGAFIVLQLTIHLYILSSM) threads the bilayer. The Extracellular segment spans residues 125–130 (PMDNKK). A helical transmembrane segment spans residues 131–151 (FFHQGFLVQMFLWILLLVVIT). The Cytoplasmic portion of the chain corresponds to 152–169 (LRLISASQSFRWVLACKR). The helical transmembrane segment at 170–190 (DLWAVSFYSYASLFTLSILPL) threads the bilayer. The Extracellular portion of the chain corresponds to 191 to 201 (RSVFIGKIKDK). Residues 202–222 (IMVKYIISETFIDLALLLLLS) traverse the membrane as a helical segment. The Cytoplasmic portion of the chain corresponds to 223-302 (TSSIEGTRYS…SSKKGRLLPN (80 aa)). A helical membrane pass occupies residues 303 to 323 (IICYFKAVFISQLFLAFVSSF). The ABC transmembrane type-1 1 domain maps to 311-621 (FISQLFLAFV…IASTVSLLIQ (311 aa)). Topologically, residues 324–351 (LNFVPSLLMPRILSYVNDPKSKSWNLVS) are extracellular. The helical transmembrane segment at 352–374 (LYVSSMLVSKIIATTCRGQGLFL) threads the bilayer. Topologically, residues 375–449 (GEKGTMQLRT…VMSIDAFKVS (75 aa)) are cytoplasmic. The segment at 410 to 434 (NASTSFEENPDSSEAEPRKKSSRKD) is disordered. Residues 424-434 (AEPRKKSSRKD) are compositionally biased toward basic and acidic residues. The chain crosses the membrane as a helical span at residues 450-470 (EAMNTFYLACEAVFMTVTALM). The Extracellular segment spans residues 471–481 (ILYSLLGWSAF). A helical transmembrane segment spans residues 482–504 (AGTFALLAMIPLNFWCATFYGNY). The Cytoplasmic segment spans residues 505–558 (QADQLILTDKRTSGISEALNSIRVIKLLAWENLFYQKIINVRDGEIRLLKKKAT). A helical membrane pass occupies residues 559–579 (IFFLNHLIWFFGPTLVSAITF). Residues 580–584 (SVFIK) are Extracellular-facing. Residues 585 to 605 (FQNQTLTPTIAFTALSLFAIL) traverse the membrane as a helical segment. Residues 606-953 (RTPMDQIAST…KFSAYKWLAD (348 aa)) are Cytoplasmic-facing. Residues 651 to 892 (FGFEDASMEW…NEFLRESINN (242 aa)) form the ABC transporter domain. Residue 686–693 (GPTGSGKS) participates in ATP binding. Residues 892 to 901 (NDSKNTTHNQ) are compositionally biased toward polar residues. Residues 892–926 (NDSKNTTHNQIDLKRSTTSKKTKNGDPEGGNSQDE) form a disordered region. A helical transmembrane segment spans residues 954 to 974 (YFGGLGVVFVFTSSSILIHGI). In terms of domain architecture, ABC transmembrane type-1 2 spans 961–1218 (VFVFTSSSIL…SSVMIIMKAS (258 aa)). Residues 975–1013 (TLSQGFWLRYWLDTGSSGSKSTWLYRIVEGHSNIYFLLT) are Extracellular-facing. Residues 1014–1034 (YIIIGLVSSFLTSGKVWIAII) traverse the membrane as a helical segment. The Cytoplasmic portion of the chain corresponds to 1035–1082 (SGTNVTKKIFAKLLSSILYAKLRFHNVTPTGRIMNRFSKDMDIIDQQL). A helical transmembrane segment spans residues 1083-1105 (IPNFEGLSYSVVVCLWIILLIGY). Over 1106 to 1109 (VTPQ) the chain is Extracellular. The chain crosses the membrane as a helical span at residues 1110-1132 (FLLFAIPLCALYYTVCTLYLRAS). Topologically, residues 1133-1197 (RELKRIDNIN…NMATEWITYR (65 aa)) are cytoplasmic. The helical transmembrane segment at 1198–1218 (VDIIGTLVLFSSSVMIIMKAS) threads the bilayer.

This sequence belongs to the ABC transporter superfamily. ABCC family. Conjugate transporter (TC 3.A.1.208) subfamily.

Its subcellular location is the membrane. The polypeptide is ABC transporter NFT1 (NFT1) (Saccharomyces cerevisiae (strain ATCC 204508 / S288c) (Baker's yeast)).